We begin with the raw amino-acid sequence, 308 residues long: Methionyl-tRNA formyltransferase (308 aa).

109–112 contributes to the (6S)-5,6,7,8-tetrahydrofolate binding site; sequence SLLP.

The protein belongs to the Fmt family.

The enzyme catalyses L-methionyl-tRNA(fMet) + (6R)-10-formyltetrahydrofolate = N-formyl-L-methionyl-tRNA(fMet) + (6S)-5,6,7,8-tetrahydrofolate + H(+). Functionally, attaches a formyl group to the free amino group of methionyl-tRNA(fMet). The formyl group appears to play a dual role in the initiator identity of N-formylmethionyl-tRNA by promoting its recognition by IF2 and preventing the misappropriation of this tRNA by the elongation apparatus. This chain is Methionyl-tRNA formyltransferase, found in Phenylobacterium zucineum (strain HLK1).